A 46-amino-acid chain; its full sequence is Bacteriocin acidocin 8912 (46 aa).

Positions 1-20 (MISSHQKTLTDKELALISGG) are excised as a propeptide.

The protein resides in the secreted. Functionally, has a bactericidal effect on sensitive cells but not a bacteriolytic effect. In Lactobacillus acidophilus, this protein is Bacteriocin acidocin 8912 (acdT).